The primary structure comprises 246 residues: Sugar fermentation stimulation protein homolog (246 aa).

It belongs to the SfsA family.

The polypeptide is Sugar fermentation stimulation protein homolog (Prochlorococcus marinus (strain MIT 9301)).